Reading from the N-terminus, the 190-residue chain is dCTP deaminase (190 aa).

Position 113–118 (113–118 (KSTYAR)) interacts with dCTP. Glu139 serves as the catalytic Proton donor/acceptor. DCTP-binding residues include Gln158, Tyr172, Lys181, and Gln182.

This sequence belongs to the dCTP deaminase family. In terms of assembly, homotrimer.

The catalysed reaction is dCTP + H2O + H(+) = dUTP + NH4(+). It participates in pyrimidine metabolism; dUMP biosynthesis; dUMP from dCTP (dUTP route): step 1/2. Functionally, catalyzes the deamination of dCTP to dUTP. In Chlamydia felis (strain Fe/C-56) (Chlamydophila felis), this protein is dCTP deaminase.